The sequence spans 430 residues: tRNA(Ile)-lysidine synthase (430 aa).

27-32 (SGGSDS) is a binding site for ATP.

This sequence belongs to the tRNA(Ile)-lysidine synthase family.

The protein localises to the cytoplasm. It carries out the reaction cytidine(34) in tRNA(Ile2) + L-lysine + ATP = lysidine(34) in tRNA(Ile2) + AMP + diphosphate + H(+). In terms of biological role, ligates lysine onto the cytidine present at position 34 of the AUA codon-specific tRNA(Ile) that contains the anticodon CAU, in an ATP-dependent manner. Cytidine is converted to lysidine, thus changing the amino acid specificity of the tRNA from methionine to isoleucine. The sequence is that of tRNA(Ile)-lysidine synthase from Rickettsia typhi (strain ATCC VR-144 / Wilmington).